The sequence spans 210 residues: Na(+)-translocating NADH-quinone reductase subunit D (210 aa).

5 helical membrane-spanning segments follow: residues 42–62 (FVMTLAVTFVTALSNFSVSLI), 72–92 (IIVQMAIIASLVIVVDQVLKA), 103–123 (VFVGLIITNCIVMGRAEAFAM), 131–151 (LIDGIGNGLGYGFVLITVGFF), and 178–198 (NGLMLLAPSAFFLIGFLIWVI).

It belongs to the NqrDE/RnfAE family. In terms of assembly, composed of six subunits; NqrA, NqrB, NqrC, NqrD, NqrE and NqrF.

Its subcellular location is the cell inner membrane. The enzyme catalyses a ubiquinone + n Na(+)(in) + NADH + H(+) = a ubiquinol + n Na(+)(out) + NAD(+). NQR complex catalyzes the reduction of ubiquinone-1 to ubiquinol by two successive reactions, coupled with the transport of Na(+) ions from the cytoplasm to the periplasm. NqrA to NqrE are probably involved in the second step, the conversion of ubisemiquinone to ubiquinol. This Vibrio parahaemolyticus serotype O3:K6 (strain RIMD 2210633) protein is Na(+)-translocating NADH-quinone reductase subunit D.